Here is a 393-residue protein sequence, read N- to C-terminus: D-alanyl-D-alanine carboxypeptidase DacA (393 aa).

Residues 1–18 (MLKRTTKIAFLSSFVALS) form the signal peptide. The Acyl-ester intermediate role is filled by S65. The active-site Proton acceptor is K68. S128 is an active-site residue. K231 provides a ligand contact to substrate.

This sequence belongs to the peptidase S11 family.

The protein localises to the cell inner membrane. The catalysed reaction is Preferential cleavage: (Ac)2-L-Lys-D-Ala-|-D-Ala. Also transpeptidation of peptidyl-alanyl moieties that are N-acyl substituents of D-alanine.. Its pathway is cell wall biogenesis; peptidoglycan biosynthesis. Its function is as follows. Removes C-terminal D-alanyl residues from sugar-peptide cell wall precursors. This is D-alanyl-D-alanine carboxypeptidase DacA (dacA) from Haemophilus influenzae (strain ATCC 51907 / DSM 11121 / KW20 / Rd).